Reading from the N-terminus, the 457-residue chain is Phosphomethylpyrimidine synthase (457 aa).

Substrate contacts are provided by residues N80, M109, Y139, H175, 195–197, 236–239, and E275; these read SRG and DSLR. H279 is a binding site for Zn(2+). Y302 is a binding site for substrate. H343 contributes to the Zn(2+) binding site. 3 residues coordinate [4Fe-4S] cluster: C423, C426, and C431.

The protein belongs to the ThiC family. [4Fe-4S] cluster serves as cofactor.

The enzyme catalyses 5-amino-1-(5-phospho-beta-D-ribosyl)imidazole + S-adenosyl-L-methionine = 4-amino-2-methyl-5-(phosphooxymethyl)pyrimidine + CO + 5'-deoxyadenosine + formate + L-methionine + 3 H(+). It participates in cofactor biosynthesis; thiamine diphosphate biosynthesis. In terms of biological role, catalyzes the synthesis of the hydroxymethylpyrimidine phosphate (HMP-P) moiety of thiamine from aminoimidazole ribotide (AIR) in a radical S-adenosyl-L-methionine (SAM)-dependent reaction. The polypeptide is Phosphomethylpyrimidine synthase (Trichormus variabilis (strain ATCC 29413 / PCC 7937) (Anabaena variabilis)).